A 63-amino-acid polypeptide reads, in one-letter code: Potassium channel toxin Sp4 (63 aa).

The first 20 residues, 1 to 20, serve as a signal peptide directing secretion; the sequence is MNKVHFALFLLVLTVLAVSG. Intrachain disulfides connect Cys31–Cys53, Cys38–Cys58, and Cys42–Cys60.

The protein belongs to the long chain scorpion toxin family. Class 2 subfamily. Expressed by the venom gland.

It localises to the secreted. In terms of biological role, this recombinant toxin selectively inhibits mouse voltage-gated potassium channel Kv1.3/KCNA3 (IC(50)=24.73 nM). The protein is Potassium channel toxin Sp4 of Scorpiops pococki (Scorpion).